A 305-amino-acid polypeptide reads, in one-letter code: Protoheme IX farnesyltransferase (305 aa).

The next 9 helical transmembrane spans lie at 26–46, 47–67, 98–118, 119–139, 147–167, 174–194, 220–240, 243–263, and 284–304; these read VMSLVVFTAFVGLWIAPQPVN, PFVAFCAVLFIALGGGASGAL, LAVGIALSGLSVMMLGLAANW, FAAGFLAFTIFFYAVVYTIWL, IVIGGAAGAFPPMIGWACATG, LLMFALIFFWTPPHFWALALF, IFAYTLVLAPFALWLGFTSVG, LYLAVSVVLNALFIAGGWQIL, and LSLYYTFLHFLALLVQHWVGG.

This sequence belongs to the UbiA prenyltransferase family. Protoheme IX farnesyltransferase subfamily. As to quaternary structure, interacts with CtaA.

The protein localises to the cell inner membrane. The catalysed reaction is heme b + (2E,6E)-farnesyl diphosphate + H2O = Fe(II)-heme o + diphosphate. The protein operates within porphyrin-containing compound metabolism; heme O biosynthesis; heme O from protoheme: step 1/1. Converts heme B (protoheme IX) to heme O by substitution of the vinyl group on carbon 2 of heme B porphyrin ring with a hydroxyethyl farnesyl side group. The chain is Protoheme IX farnesyltransferase from Paracoccus denitrificans (strain Pd 1222).